Consider the following 562-residue polypeptide: Dihydroxy-acid dehydratase (562 aa).

Asp-80 contacts Mg(2+). Cys-121 provides a ligand contact to [2Fe-2S] cluster. Residues Asp-122 and Lys-123 each contribute to the Mg(2+) site. Position 123 is an N6-carboxylysine (Lys-123). Position 194 (Cys-194) interacts with [2Fe-2S] cluster. Glu-446 provides a ligand contact to Mg(2+). The active-site Proton acceptor is Ser-472.

Belongs to the IlvD/Edd family. In terms of assembly, homodimer. It depends on [2Fe-2S] cluster as a cofactor. Mg(2+) serves as cofactor.

The catalysed reaction is (2R)-2,3-dihydroxy-3-methylbutanoate = 3-methyl-2-oxobutanoate + H2O. It catalyses the reaction (2R,3R)-2,3-dihydroxy-3-methylpentanoate = (S)-3-methyl-2-oxopentanoate + H2O. The protein operates within amino-acid biosynthesis; L-isoleucine biosynthesis; L-isoleucine from 2-oxobutanoate: step 3/4. It participates in amino-acid biosynthesis; L-valine biosynthesis; L-valine from pyruvate: step 3/4. Functionally, functions in the biosynthesis of branched-chain amino acids. Catalyzes the dehydration of (2R,3R)-2,3-dihydroxy-3-methylpentanoate (2,3-dihydroxy-3-methylvalerate) into 2-oxo-3-methylpentanoate (2-oxo-3-methylvalerate) and of (2R)-2,3-dihydroxy-3-methylbutanoate (2,3-dihydroxyisovalerate) into 2-oxo-3-methylbutanoate (2-oxoisovalerate), the penultimate precursor to L-isoleucine and L-valine, respectively. The polypeptide is Dihydroxy-acid dehydratase (Macrococcus caseolyticus (strain JCSC5402) (Macrococcoides caseolyticum)).